The primary structure comprises 330 residues: Ketol-acid reductoisomerase (NADP(+)) (330 aa).

The region spanning 1–181 (MKMYYESDVN…GFTKAGVIET (181 aa)) is the KARI N-terminal Rossmann domain. Residues 24-27 (YGSQ), Arg47, Ser52, and 82-85 (DEIQ) each bind NADP(+). His107 is a catalytic residue. Position 133 (Gly133) interacts with NADP(+). Residues 182-327 (TFKEETETDL…ERLRKACGLQ (146 aa)) form the KARI C-terminal knotted domain. Asp190, Glu194, Glu226, and Glu230 together coordinate Mg(2+). Ser251 contributes to the substrate binding site.

Belongs to the ketol-acid reductoisomerase family. Mg(2+) serves as cofactor.

It catalyses the reaction (2R)-2,3-dihydroxy-3-methylbutanoate + NADP(+) = (2S)-2-acetolactate + NADPH + H(+). The enzyme catalyses (2R,3R)-2,3-dihydroxy-3-methylpentanoate + NADP(+) = (S)-2-ethyl-2-hydroxy-3-oxobutanoate + NADPH + H(+). The protein operates within amino-acid biosynthesis; L-isoleucine biosynthesis; L-isoleucine from 2-oxobutanoate: step 2/4. It functions in the pathway amino-acid biosynthesis; L-valine biosynthesis; L-valine from pyruvate: step 2/4. Its function is as follows. Involved in the biosynthesis of branched-chain amino acids (BCAA). Catalyzes an alkyl-migration followed by a ketol-acid reduction of (S)-2-acetolactate (S2AL) to yield (R)-2,3-dihydroxy-isovalerate. In the isomerase reaction, S2AL is rearranged via a Mg-dependent methyl migration to produce 3-hydroxy-3-methyl-2-ketobutyrate (HMKB). In the reductase reaction, this 2-ketoacid undergoes a metal-dependent reduction by NADPH to yield (R)-2,3-dihydroxy-isovalerate. This Methanobrevibacter smithii (strain ATCC 35061 / DSM 861 / OCM 144 / PS) protein is Ketol-acid reductoisomerase (NADP(+)).